A 408-amino-acid chain; its full sequence is MSVMDAIVVSKPPAHTSASLEKPSLIGLSREEMGAALRERGVAEKQIKMRVAQLWNWIYVRGVSDFDHMTNVAKDMREMLKQHFTIARPEIVEEQVSNDGTRKWLLRFPPRGAGRPVEIEAVYIPEEGRGTLCISSQVGCTLTCSFCHTGTQRLVRNLTAEEILSQLLLARDRLGDFPDREAPQGTIMPAEGRKVSNIVMMGMGEPLYNFDAVKQALLIATDGDGLSLSRRRVTLSTSGVVPEIFRTGEEIGVMLAISLHAVRDDLRDILVPINKKYPLKELIEACKAYPGLSNARRITFEYVMLKDVNDSLEDAKGLIKLLKGVPAKINLIPFNPWPGTNYQCSDWEQIEKFADFINSAGYASPIRTPRGRDILAACGQLKSESERMRKTERLAFEAMMIANHGADD.

Glutamate 120 (proton acceptor) is an active-site residue. The Radical SAM core domain maps to 126 to 375; that stretch reads EEGRGTLCIS…IRTPRGRDIL (250 aa). A disulfide bond links cysteine 133 and cysteine 378. [4Fe-4S] cluster is bound by residues cysteine 140, cysteine 144, and cysteine 147. S-adenosyl-L-methionine contacts are provided by residues 204–205, serine 236, 258–260, and asparagine 335; these read GE and SLH. The active-site S-methylcysteine intermediate is cysteine 378.

The protein belongs to the radical SAM superfamily. RlmN family. It depends on [4Fe-4S] cluster as a cofactor.

The protein resides in the cytoplasm. The catalysed reaction is adenosine(2503) in 23S rRNA + 2 reduced [2Fe-2S]-[ferredoxin] + 2 S-adenosyl-L-methionine = 2-methyladenosine(2503) in 23S rRNA + 5'-deoxyadenosine + L-methionine + 2 oxidized [2Fe-2S]-[ferredoxin] + S-adenosyl-L-homocysteine. It catalyses the reaction adenosine(37) in tRNA + 2 reduced [2Fe-2S]-[ferredoxin] + 2 S-adenosyl-L-methionine = 2-methyladenosine(37) in tRNA + 5'-deoxyadenosine + L-methionine + 2 oxidized [2Fe-2S]-[ferredoxin] + S-adenosyl-L-homocysteine. Specifically methylates position 2 of adenine 2503 in 23S rRNA and position 2 of adenine 37 in tRNAs. m2A2503 modification seems to play a crucial role in the proofreading step occurring at the peptidyl transferase center and thus would serve to optimize ribosomal fidelity. In Rhizobium leguminosarum bv. trifolii (strain WSM2304), this protein is Dual-specificity RNA methyltransferase RlmN.